A 437-amino-acid chain; its full sequence is Integrase (437 aa).

One can recognise a Core-binding (CB) domain in the interval 73–158; the sequence is WTVERWLTHW…TARTAFGEAY (86 aa). In terms of domain architecture, Tyr recombinase spans 179 to 428; sequence EEVEPLEVED…DSVRNDVADR (250 aa). Active-site residues include Arg-214, Lys-245, His-379, Arg-382, and Trp-405. The O-(3'-phospho-DNA)-tyrosine intermediate role is filled by Tyr-414.

It belongs to the 'phage' integrase family.

Its function is as follows. Is a recombinase (or integrase), catalyzing the cutting and rejoining of the recombining DNA molecules. In Saccharopolyspora erythraea (Streptomyces erythraeus), this protein is Integrase (int).